Reading from the N-terminus, the 381-residue chain is Probable tRNA sulfurtransferase (381 aa).

The THUMP domain maps to 57-160 (EKGIEKLKSV…NKAYVYSKKI (104 aa)). Residues 177-178 (ML), 202-203 (YF), Arg259, Gly281, and Gln290 contribute to the ATP site.

Belongs to the ThiI family.

The protein resides in the cytoplasm. The catalysed reaction is [ThiI sulfur-carrier protein]-S-sulfanyl-L-cysteine + a uridine in tRNA + 2 reduced [2Fe-2S]-[ferredoxin] + ATP + H(+) = [ThiI sulfur-carrier protein]-L-cysteine + a 4-thiouridine in tRNA + 2 oxidized [2Fe-2S]-[ferredoxin] + AMP + diphosphate. It catalyses the reaction [ThiS sulfur-carrier protein]-C-terminal Gly-Gly-AMP + S-sulfanyl-L-cysteinyl-[cysteine desulfurase] + AH2 = [ThiS sulfur-carrier protein]-C-terminal-Gly-aminoethanethioate + L-cysteinyl-[cysteine desulfurase] + A + AMP + 2 H(+). The protein operates within cofactor biosynthesis; thiamine diphosphate biosynthesis. Its function is as follows. Catalyzes the ATP-dependent transfer of a sulfur to tRNA to produce 4-thiouridine in position 8 of tRNAs, which functions as a near-UV photosensor. Also catalyzes the transfer of sulfur to the sulfur carrier protein ThiS, forming ThiS-thiocarboxylate. This is a step in the synthesis of thiazole, in the thiamine biosynthesis pathway. The sulfur is donated as persulfide by IscS. In Clostridium kluyveri (strain NBRC 12016), this protein is Probable tRNA sulfurtransferase.